A 412-amino-acid polypeptide reads, in one-letter code: L-cysteine:1D-myo-inositol 2-amino-2-deoxy-alpha-D-glucopyranoside ligase (412 aa).

C43 is a Zn(2+) binding site. L-cysteinyl-5'-AMP is bound by residues 43–46, T58, and 81–83; these read CGIT and NVT. Positions 45 to 55 match the 'HIGH' region motif; the sequence is ITPYDATHLGH. Positions 186-191 match the 'ERGGDP' region motif; it reads ERGGDP. L-cysteinyl-5'-AMP is bound at residue W227. C231 lines the Zn(2+) pocket. 249-251 is an L-cysteinyl-5'-AMP binding site; it reads GND. H256 lines the Zn(2+) pocket. I283 is an L-cysteinyl-5'-AMP binding site. Positions 289-293 match the 'KMSKS' region motif; the sequence is KMSKS.

Belongs to the class-I aminoacyl-tRNA synthetase family. MshC subfamily. In terms of assembly, monomer. The cofactor is Zn(2+).

It carries out the reaction 1D-myo-inositol 2-amino-2-deoxy-alpha-D-glucopyranoside + L-cysteine + ATP = 1D-myo-inositol 2-(L-cysteinylamino)-2-deoxy-alpha-D-glucopyranoside + AMP + diphosphate + H(+). Catalyzes the ATP-dependent condensation of GlcN-Ins and L-cysteine to form L-Cys-GlcN-Ins. The sequence is that of L-cysteine:1D-myo-inositol 2-amino-2-deoxy-alpha-D-glucopyranoside ligase from Salinispora arenicola (strain CNS-205).